Reading from the N-terminus, the 478-residue chain is Methionine aminopeptidase 2-1 (478 aa).

A disordered region spans residues 1–124; the sequence is MGSKSPEGHN…PRVPLSTLFP (124 aa). Residues 46–56 show a composition bias toward acidic residues; it reads NDDDDADDDEK. The segment covering 92-104 has biased composition (basic residues); that stretch reads KKKKKRKRSKKKA. Residue H230 coordinates substrate. A divalent metal cation contacts are provided by D251, D262, and H331. H339 contributes to the substrate binding site. Residues E364 and E459 each contribute to the a divalent metal cation site.

This sequence belongs to the peptidase M24A family. Methionine aminopeptidase eukaryotic type 2 subfamily. It depends on Co(2+) as a cofactor. Zn(2+) serves as cofactor. Mn(2+) is required as a cofactor. The cofactor is Fe(2+).

Its subcellular location is the cytoplasm. The enzyme catalyses Release of N-terminal amino acids, preferentially methionine, from peptides and arylamides.. Cotranslationally removes the N-terminal methionine from nascent proteins. The N-terminal methionine is often cleaved when the second residue in the primary sequence is small and uncharged (Met-Ala-, Cys, Gly, Pro, Ser, Thr, or Val). This is Methionine aminopeptidase 2-1 from Aspergillus clavatus (strain ATCC 1007 / CBS 513.65 / DSM 816 / NCTC 3887 / NRRL 1 / QM 1276 / 107).